A 587-amino-acid chain; its full sequence is Lipoprotein LpqB (587 aa).

The signal sequence occupies residues 1–19 (MERLMRLTILLFLGAVLAG). Cys20 is lipidated: N-palmitoyl cysteine. Cys20 carries S-diacylglycerol cysteine lipidation.

This sequence belongs to the LpqB lipoprotein family. Interacts with MtrB, probably extracytoplasmically.

The protein resides in the cell membrane. It localises to the secreted. Its subcellular location is the cell wall. Its function is as follows. May modulate activity of the MtrAB system in controlling homeostasis of the cell wall and cell division. The protein is Lipoprotein LpqB of Mycobacterium tuberculosis (strain CDC 1551 / Oshkosh).